We begin with the raw amino-acid sequence, 404 residues long: Cysteine desulfurase IscS (404 aa).

Pyridoxal 5'-phosphate contacts are provided by residues 75 to 76 (AT), Asn-155, Gln-183, and 203 to 205 (SGH). The residue at position 206 (Lys-206) is an N6-(pyridoxal phosphate)lysine. Thr-243 serves as a coordination point for pyridoxal 5'-phosphate. Residue Cys-328 is the Cysteine persulfide intermediate of the active site. A [2Fe-2S] cluster-binding site is contributed by Cys-328.

It belongs to the class-V pyridoxal-phosphate-dependent aminotransferase family. NifS/IscS subfamily. Homodimer. Forms a heterotetramer with IscU, interacts with other sulfur acceptors. It depends on pyridoxal 5'-phosphate as a cofactor.

It is found in the cytoplasm. It catalyses the reaction (sulfur carrier)-H + L-cysteine = (sulfur carrier)-SH + L-alanine. The protein operates within cofactor biosynthesis; iron-sulfur cluster biosynthesis. Its function is as follows. Master enzyme that delivers sulfur to a number of partners involved in Fe-S cluster assembly, tRNA modification or cofactor biosynthesis. Catalyzes the removal of elemental sulfur atoms from cysteine to produce alanine. Functions as a sulfur delivery protein for Fe-S cluster synthesis onto IscU, an Fe-S scaffold assembly protein, as well as other S acceptor proteins. The sequence is that of Cysteine desulfurase IscS from Shewanella sp. (strain ANA-3).